The primary structure comprises 75 residues: uncharacterized protein (75 aa).

The Glutaredoxin domain maps to 1–75; the sequence is MIKIYSTPTC…KAEIDKLIEK (75 aa). Cysteines 10 and 13 form a disulfide.

The protein belongs to the glutaredoxin family.

This is an uncharacterized protein from Clostridium pasteurianum.